The primary structure comprises 572 residues: Periplasmic pectate lyase (572 aa).

The N-terminal stretch at 1 to 23 (MKKRALLLSMSVLAMLYIPAGQA) is a signal peptide.

It belongs to the polysaccharide lyase 2 family.

Its subcellular location is the periplasm. The enzyme catalyses Eliminative cleavage of (1-&gt;4)-alpha-D-galacturonan to give oligosaccharides with 4-deoxy-alpha-D-galact-4-enuronosyl groups at their non-reducing ends.. The protein operates within glycan metabolism; pectin degradation; 2-dehydro-3-deoxy-D-gluconate from pectin: step 2/5. The chain is Periplasmic pectate lyase (pelY) from Yersinia pseudotuberculosis serotype I (strain IP32953).